We begin with the raw amino-acid sequence, 72 residues long: UPF0270 protein PM1156 (72 aa).

This sequence belongs to the UPF0270 family.

The chain is UPF0270 protein PM1156 from Pasteurella multocida (strain Pm70).